Consider the following 381-residue polypeptide: Succinyl-diaminopimelate desuccinylase (381 aa).

Zn(2+) is bound at residue His-71. The active site involves Asp-73. Asp-104 is a Zn(2+) binding site. Catalysis depends on Glu-138, which acts as the Proton acceptor. Glu-139, Glu-167, and His-353 together coordinate Zn(2+).

The protein belongs to the peptidase M20A family. DapE subfamily. In terms of assembly, homodimer. Zn(2+) serves as cofactor. It depends on Co(2+) as a cofactor.

The catalysed reaction is N-succinyl-(2S,6S)-2,6-diaminopimelate + H2O = (2S,6S)-2,6-diaminopimelate + succinate. It participates in amino-acid biosynthesis; L-lysine biosynthesis via DAP pathway; LL-2,6-diaminopimelate from (S)-tetrahydrodipicolinate (succinylase route): step 3/3. Its function is as follows. Catalyzes the hydrolysis of N-succinyl-L,L-diaminopimelic acid (SDAP), forming succinate and LL-2,6-diaminopimelate (DAP), an intermediate involved in the bacterial biosynthesis of lysine and meso-diaminopimelic acid, an essential component of bacterial cell walls. This Shewanella halifaxensis (strain HAW-EB4) protein is Succinyl-diaminopimelate desuccinylase.